Consider the following 626-residue polypeptide: 4-hydroxy-3-methylbut-2-en-1-yl diphosphate synthase (flavodoxin) (626 aa).

Positions 521, 524, 555, and 562 each coordinate [4Fe-4S] cluster.

Belongs to the IspG family. [4Fe-4S] cluster is required as a cofactor.

It catalyses the reaction (2E)-4-hydroxy-3-methylbut-2-enyl diphosphate + oxidized [flavodoxin] + H2O + 2 H(+) = 2-C-methyl-D-erythritol 2,4-cyclic diphosphate + reduced [flavodoxin]. The protein operates within isoprenoid biosynthesis; isopentenyl diphosphate biosynthesis via DXP pathway; isopentenyl diphosphate from 1-deoxy-D-xylulose 5-phosphate: step 5/6. Its function is as follows. Converts 2C-methyl-D-erythritol 2,4-cyclodiphosphate (ME-2,4cPP) into 1-hydroxy-2-methyl-2-(E)-butenyl 4-diphosphate. In Bacteroides fragilis (strain ATCC 25285 / DSM 2151 / CCUG 4856 / JCM 11019 / LMG 10263 / NCTC 9343 / Onslow / VPI 2553 / EN-2), this protein is 4-hydroxy-3-methylbut-2-en-1-yl diphosphate synthase (flavodoxin).